A 2264-amino-acid polypeptide reads, in one-letter code: RNA1 polyprotein (2264 aa).

Residues M566 to G1156 are Cytoplasmic-facing. One can recognise an SF3 helicase domain in the interval T750 to P916. G780–S787 contacts ATP. Residues C1157–W1177 traverse the membrane as a helical segment. Residues K1178–K1203 lie on the Lumenal side of the membrane. Residues A1227 to L1436 enclose the Peptidase C3 domain. Residues H1270, E1308, and C1400 each act as for picornain 3C-like protease activity in the active site. Residues N1713–F1841 enclose the RdRp catalytic domain.

This sequence belongs to the nepoviruses RNA1 polyprotein family. In terms of processing, specific enzymatic cleavages by picornain 3C-like protease in vivo yield mature proteins. Picornain 3C-like protease is autocatalytically processed. Post-translationally, VPg is uridylylated by the polymerase and is covalently linked to the 5'-end of genomic RNA. This uridylylated form acts as a nucleotide-peptide primer for the polymerase.

It is found in the host endoplasmic reticulum lumen. The protein resides in the host endoplasmic reticulum membrane. The enzyme catalyses RNA(n) + a ribonucleoside 5'-triphosphate = RNA(n+1) + diphosphate. In terms of biological role, picornain 3C-like protease is a thiol protease that cleaves the P1 and P2 polyproteins. This chain is RNA1 polyprotein, found in Beet ringspot virus (BRSV).